A 155-amino-acid chain; its full sequence is Ribosomal RNA large subunit methyltransferase H (155 aa).

S-adenosyl-L-methionine is bound by residues leucine 72, glycine 103, and leucine 122 to leucine 127.

It belongs to the RNA methyltransferase RlmH family. As to quaternary structure, homodimer.

It is found in the cytoplasm. It catalyses the reaction pseudouridine(1915) in 23S rRNA + S-adenosyl-L-methionine = N(3)-methylpseudouridine(1915) in 23S rRNA + S-adenosyl-L-homocysteine + H(+). Specifically methylates the pseudouridine at position 1915 (m3Psi1915) in 23S rRNA. In Delftia acidovorans (strain DSM 14801 / SPH-1), this protein is Ribosomal RNA large subunit methyltransferase H.